Consider the following 323-residue polypeptide: NADH-ubiquinone oxidoreductase chain 1 (323 aa).

A run of 9 helical transmembrane segments spans residues 10-30 (LLYIIIEGGLKSLIVIIGLLI), 52-72 (PNVVGFVGLLQPLADGLKLVL), 84-104 (IIYAIAPILTFTISIVLWSVI), 119-139 (VIFILAISSIGVYGIILAGWA), 157-177 (VSYEVALGLIILSIITYAGTV), 189-209 (VWFIVPLLPGFLLAFISALAE), 245-265 (YANIILMSVLLSVFFLGGIVS), 268-288 (ISGAMKGVGMLCSFIWVRATL), and 302-322 (KSLLPFALLIYIGVISMVLII).

This sequence belongs to the complex I subunit 1 family.

The protein resides in the mitochondrion inner membrane. It carries out the reaction a ubiquinone + NADH + 5 H(+)(in) = a ubiquinol + NAD(+) + 4 H(+)(out). Core subunit of the mitochondrial membrane respiratory chain NADH dehydrogenase (Complex I) that is believed to belong to the minimal assembly required for catalysis. Complex I functions in the transfer of electrons from NADH to the respiratory chain. The immediate electron acceptor for the enzyme is believed to be ubiquinone. This chain is NADH-ubiquinone oxidoreductase chain 1 (nad1), found in Dictyostelium citrinum (Slime mold).